We begin with the raw amino-acid sequence, 333 residues long: Probable tRNA pseudouridine synthase B (333 aa).

Asp66 acts as the Nucleophile in catalysis. Residues 233–308 form the PUA domain; the sequence is LKKIIVKDSA…EVVEITRVIM (76 aa).

The protein belongs to the pseudouridine synthase TruB family. Type 2 subfamily.

It carries out the reaction uridine(55) in tRNA = pseudouridine(55) in tRNA. In terms of biological role, could be responsible for synthesis of pseudouridine from uracil-55 in the psi GC loop of transfer RNAs. In Methanococcus maripaludis (strain C7 / ATCC BAA-1331), this protein is Probable tRNA pseudouridine synthase B.